Reading from the N-terminus, the 184-residue chain is Fruit protein pKIWI501 (184 aa).

The tract at residues 1 to 184 (MATVEVTPAV…TEVPVDKTEE (184 aa)) is disordered. 2 stretches are compositionally biased toward low complexity: residues 25–36 (PQEPQPEAAVAA) and 53–65 (PEAV…PAAT). Residues 72-92 (EVAEAEEEVVEEPQEVPEEPV) are compositionally biased toward acidic residues. Basic and acidic residues predominate over residues 96–119 (AAKEVEATEGKAEPTGEMKDKTPE). Over residues 120 to 156 (ATDAPEAPAAAEEPTDAPEAPAVAEEPTNAPEAPAVG) the composition is skewed to low complexity. Over residues 159 to 168 (PEAKEGKPDE) the composition is skewed to basic and acidic residues.

The protein to H.brasiliensis latex allergen Hev b 5.

In Actinidia deliciosa (Kiwi), this protein is Fruit protein pKIWI501.